We begin with the raw amino-acid sequence, 455 residues long: Golgi pH regulator (455 aa).

The next 5 membrane-spanning stretches (helical) occupy residues 5-25 (IDSS…WLFF), 46-66 (VTFA…LGVL), 79-99 (LCVI…YFIV), 114-134 (CLLW…FPIL), and 150-170 (VGVI…VNCP). Residues N180 and N243 are each glycosylated (N-linked (GlcNAc...) asparagine). Helical transmembrane passes span 290-310 (GYFF…NIVL), 343-363 (ISFI…LITL), 378-398 (VIVL…VLLI), and 425-445 (WFDV…YLAH).

The protein belongs to the Golgi pH regulator (TC 1.A.38) family. As to quaternary structure, homotrimer. Interacts with RABL3; the interaction stabilizes GPR89B.

Its subcellular location is the golgi apparatus membrane. It carries out the reaction iodide(out) = iodide(in). The catalysed reaction is chloride(in) = chloride(out). It catalyses the reaction bromide(in) = bromide(out). The enzyme catalyses fluoride(in) = fluoride(out). Voltage-gated channel that enables the transfer of anions such as iodide, chloride, bromide and fluoride which may function in counter-ion conductance and participates in Golgi acidification. Plays a role in lymphocyte development, probably by acting as a RABL3 effector in hematopoietic cells. This is Golgi pH regulator from Cricetulus griseus (Chinese hamster).